Consider the following 218-residue polypeptide: DNA-directed RNA polymerase III subunit RPC7-like (218 aa).

The disordered stretch occupies residues 130 to 218 (TIILPKRPPK…SDDNMDEAIY (89 aa)). The segment covering 139 to 160 (KSTDDKEETIQKLETLEKKEEE) has biased composition (basic and acidic residues). Acidic residues-rich tracts occupy residues 161–193 (VTSE…EETD) and 201–218 (NGED…EAIY).

Belongs to the eukaryotic RPC7 RNA polymerase subunit family. As to quaternary structure, component of the RNA polymerase III (Pol III) complex consisting of 17 subunits. Pol III exists as two alternative complexes defined by the mutually exclusive incorporation of subunit POLR3G/RPC7alpha or POLR3GL/RPC7beta. Found in a trimeric complex with POLR3C/RPC3 and POLR3F/RPC6. Directly interacts with POLR3C. Expressed in the liver.

It localises to the nucleus. DNA-dependent RNA polymerase catalyzes the transcription of DNA into RNA using the four ribonucleoside triphosphates as substrates. Specific peripheric component of RNA polymerase III which synthesizes small RNAs, such as 5S rRNA and tRNAs. The polypeptide is DNA-directed RNA polymerase III subunit RPC7-like (Mus musculus (Mouse)).